Reading from the N-terminus, the 349-residue chain is Ribosomal RNA small subunit methyltransferase H 1 (349 aa).

S-adenosyl-L-methionine is bound by residues 79-81 (GGH), Asp99, Phe129, Asp148, and Gln155.

The protein belongs to the methyltransferase superfamily. RsmH family.

It localises to the cytoplasm. The catalysed reaction is cytidine(1402) in 16S rRNA + S-adenosyl-L-methionine = N(4)-methylcytidine(1402) in 16S rRNA + S-adenosyl-L-homocysteine + H(+). Its function is as follows. Specifically methylates the N4 position of cytidine in position 1402 (C1402) of 16S rRNA. In Agathobacter rectalis (strain ATCC 33656 / DSM 3377 / JCM 17463 / KCTC 5835 / VPI 0990) (Eubacterium rectale), this protein is Ribosomal RNA small subunit methyltransferase H 1.